The chain runs to 102 residues: Large ribosomal subunit protein bL21 (102 aa).

Belongs to the bacterial ribosomal protein bL21 family. As to quaternary structure, part of the 50S ribosomal subunit. Contacts protein L20.

This protein binds to 23S rRNA in the presence of protein L20. The protein is Large ribosomal subunit protein bL21 of Finegoldia magna (strain ATCC 29328 / DSM 20472 / WAL 2508) (Peptostreptococcus magnus).